A 438-amino-acid chain; its full sequence is Glutamyl-tRNA(Gln) amidotransferase subunit D (438 aa).

Residues 92–422 form the Asparaginase/glutaminase domain; that stretch reads PEVTIIGTGG…EEVRKMMLTN (331 aa). Catalysis depends on residues T102, T178, D179, and K256.

It belongs to the asparaginase 1 family. GatD subfamily. Heterodimer of GatD and GatE.

The catalysed reaction is L-glutamyl-tRNA(Gln) + L-glutamine + ATP + H2O = L-glutaminyl-tRNA(Gln) + L-glutamate + ADP + phosphate + H(+). In terms of biological role, allows the formation of correctly charged Gln-tRNA(Gln) through the transamidation of misacylated Glu-tRNA(Gln) in organisms which lack glutaminyl-tRNA synthetase. The reaction takes place in the presence of glutamine and ATP through an activated gamma-phospho-Glu-tRNA(Gln). The GatDE system is specific for glutamate and does not act on aspartate. In Pyrococcus abyssi (strain GE5 / Orsay), this protein is Glutamyl-tRNA(Gln) amidotransferase subunit D.